The sequence spans 399 residues: Phosphoglycerate kinase (399 aa).

Substrate is bound by residues 22–24 (DLN), Arg-37, 60–63 (HFGR), Arg-119, and Arg-152. Residues Lys-202, Glu-324, and 354-357 (GGDT) each bind ATP.

Belongs to the phosphoglycerate kinase family. Monomer.

It localises to the cytoplasm. The enzyme catalyses (2R)-3-phosphoglycerate + ATP = (2R)-3-phospho-glyceroyl phosphate + ADP. Its pathway is carbohydrate degradation; glycolysis; pyruvate from D-glyceraldehyde 3-phosphate: step 2/5. The chain is Phosphoglycerate kinase from Sinorhizobium medicae (strain WSM419) (Ensifer medicae).